We begin with the raw amino-acid sequence, 415 residues long: Palmitoyl-acyl carrier protein thioesterase, chloroplastic (415 aa).

Composition is skewed to low complexity over residues 1 to 16 and 24 to 41; these read MVAT…LPSA and KLGN…KSTP. The N-terminal 60 residues, 1–60, are a transit peptide targeting the chloroplast; sequence MVATAASSAFFPLPSADTSSRPGKLGNKPSSLSPLKPKSTPNGGLQVKANASAPPKINGS. Positions 1 to 81 are disordered; the sequence is MVATAASSAF…QEDAHSAPPP (81 aa). Active-site residues include Asn314, His316, and Cys351.

The protein belongs to the acyl-ACP thioesterase family.

The protein localises to the plastid. Its subcellular location is the chloroplast. It carries out the reaction hexadecanoyl-[ACP] + H2O = hexadecanoate + holo-[ACP] + H(+). Plays an essential role in chain termination during de novo fatty acid synthesis. High thioesterase activity for palmitoyl-ACP versus other acyl-ACPs. The protein is Palmitoyl-acyl carrier protein thioesterase, chloroplastic (FATB1) of Cuphea hookeriana (Cigar plant).